A 457-amino-acid polypeptide reads, in one-letter code: Probable ECA polymerase (457 aa).

11 helical membrane passes run 3 to 23 (LLQF…ILTL), 41 to 61 (MLFL…VFGF), 65 to 85 (VVPA…YAIY), 118 to 138 (IMAL…GFLL), 154 to 174 (GVAL…VYFL), 181 to 201 (WLLF…IVGG), 206 to 226 (IIIA…ITLW), 227 to 247 (MLAL…LKRY), 340 to 360 (LVVM…GLII), 377 to 397 (YKAA…IVLA), and 408 to 428 (VVFF…LYWL).

Belongs to the WzyE family. Probably part of a complex composed of WzxE, WzyE and WzzE.

The protein localises to the cell inner membrane. It participates in bacterial outer membrane biogenesis; enterobacterial common antigen biosynthesis. Probably involved in the polymerization of enterobacterial common antigen (ECA) trisaccharide repeat units. This Erwinia tasmaniensis (strain DSM 17950 / CFBP 7177 / CIP 109463 / NCPPB 4357 / Et1/99) protein is Probable ECA polymerase.